Reading from the N-terminus, the 939-residue chain is UvrABC system protein A (939 aa).

32–39 lines the ATP pocket; it reads GLSGSGKS. The C4-type zinc-finger motif lies at 252–279; sequence CPDCGISIGEISPSMFSFNAPFGKCDVC. 2 ABC transporter domains span residues 309 to 588 and 608 to 936; these read WGEG…KESI and AGKN…QYLK. 640-647 provides a ligand contact to ATP; sequence GVSGSGKS. A C4-type zinc finger spans residues 739–765; it reads CEACKGDGIVRIEMQFLSDVYVPCDVC.

Belongs to the ABC transporter superfamily. UvrA family. As to quaternary structure, forms a heterotetramer with UvrB during the search for lesions.

It localises to the cytoplasm. The UvrABC repair system catalyzes the recognition and processing of DNA lesions. UvrA is an ATPase and a DNA-binding protein. A damage recognition complex composed of 2 UvrA and 2 UvrB subunits scans DNA for abnormalities. When the presence of a lesion has been verified by UvrB, the UvrA molecules dissociate. The protein is UvrABC system protein A of Clostridium acetobutylicum (strain ATCC 824 / DSM 792 / JCM 1419 / IAM 19013 / LMG 5710 / NBRC 13948 / NRRL B-527 / VKM B-1787 / 2291 / W).